A 283-amino-acid polypeptide reads, in one-letter code: Protein-L-isoaspartate O-methyltransferase (283 aa).

Serine 122 is a catalytic residue.

It belongs to the methyltransferase superfamily. L-isoaspartyl/D-aspartyl protein methyltransferase family.

The protein localises to the cytoplasm. The catalysed reaction is [protein]-L-isoaspartate + S-adenosyl-L-methionine = [protein]-L-isoaspartate alpha-methyl ester + S-adenosyl-L-homocysteine. Its function is as follows. Catalyzes the methyl esterification of L-isoaspartyl residues in peptides and proteins that result from spontaneous decomposition of normal L-aspartyl and L-asparaginyl residues. It plays a role in the repair and/or degradation of damaged proteins. This is Protein-L-isoaspartate O-methyltransferase from Leptothrix cholodnii (strain ATCC 51168 / LMG 8142 / SP-6) (Leptothrix discophora (strain SP-6)).